The following is a 363-amino-acid chain: Dihydroorotate dehydrogenase (quinone) (363 aa).

FMN contacts are provided by residues 62 to 66 (AGYDK) and T86. K66 is a substrate binding site. 111–115 (NRLGF) is a substrate binding site. The FMN site is built by N140 and N171. N171 contacts substrate. S174 serves as the catalytic Nucleophile. N176 contacts substrate. FMN contacts are provided by K216 and S244. 245 to 246 (NT) is a substrate binding site. FMN is bound by residues G266, G295, and 316–317 (YT).

It belongs to the dihydroorotate dehydrogenase family. Type 2 subfamily. Monomer. Requires FMN as cofactor.

The protein resides in the cell membrane. It carries out the reaction (S)-dihydroorotate + a quinone = orotate + a quinol. It participates in pyrimidine metabolism; UMP biosynthesis via de novo pathway; orotate from (S)-dihydroorotate (quinone route): step 1/1. Its function is as follows. Catalyzes the conversion of dihydroorotate to orotate with quinone as electron acceptor. In Chelativorans sp. (strain BNC1), this protein is Dihydroorotate dehydrogenase (quinone).